We begin with the raw amino-acid sequence, 178 residues long: Large ribosomal subunit protein uL6 (178 aa).

This sequence belongs to the universal ribosomal protein uL6 family. In terms of assembly, part of the 50S ribosomal subunit.

Functionally, this protein binds to the 23S rRNA, and is important in its secondary structure. It is located near the subunit interface in the base of the L7/L12 stalk, and near the tRNA binding site of the peptidyltransferase center. This is Large ribosomal subunit protein uL6 from Frankia alni (strain DSM 45986 / CECT 9034 / ACN14a).